Consider the following 538-residue polypeptide: Syncytin-1 (538 aa).

The first 20 residues, 1–20, serve as a signal peptide directing secretion; that stretch reads MALPYHILLFTVLLPSFTLT. At 21-443 the chain is on the extracellular side; it reads APPPCRCMTS…NTGPWGLLSQ (423 aa). Asn-169 is a glycosylation site (N-linked (GlcNAc...) asparagine). The CXXC signature appears at 186 to 189; the sequence is CWIC. 3 disulfide bridges follow: Cys-186–Cys-189, Cys-186–Cys-405, and Cys-397–Cys-404. N-linked (GlcNAc...) asparagine glycans are attached at residues Asn-208, Asn-214, Asn-234, and Asn-281. The segment at 320 to 340 is fusion peptide; sequence ILPFVIGAGVLGALGTGIGGI. Positions 380–396 are immunosuppression; the sequence is LQNRRALDLLTAERGGT. Residues 397–405 carry the CX6CC motif; sequence CLFLGEECC. N-linked (GlcNAc...) asparagine glycosylation is present at Asn-409. A helical transmembrane segment spans residues 444–464; it reads WMPWILPFLGPLAAIILLLLF. The segment at 465 to 484 is essential for the fusiogenic function; the sequence is GPCIFNLLVNFVSSRIEAVK. Topologically, residues 465 to 538 are cytoplasmic; sequence GPCIFNLLVN…LLRPNSAGSS (74 aa). The segment at 496 to 538 is disordered; sequence KIYRRPLDRPASPRSDVNDIKCTPPEEISTAQPLLRPNSAGSS.

Belongs to the gamma type-C retroviral envelope protein family. HERV class-I W env subfamily. As to quaternary structure, the mature envelope protein (Env) consists of a trimer of SU-TM heterodimers attached probably by a labile interchain disulfide bond. Interacts with the C-type lectin CD209/DC-SIGN. Specific enzymatic cleavages in vivo yield mature proteins. Envelope glycoproteins are synthesized as an inactive precursor that is heavily N-glycosylated and processed likely by furin in the Golgi to yield the mature SU and TM proteins. The cleavage site between SU and TM requires the minimal sequence [KR]-X-[KR]-R. Post-translationally, the CXXC motif is highly conserved across a broad range of retroviral envelope proteins. It is thought to participate in the formation of a labile disulfide bond possibly with the CX6CC motif present in the transmembrane protein.

The protein localises to the cell membrane. It is found in the virion. Its function is as follows. This endogenous retroviral envelope protein has retained its original fusogenic properties and participates in trophoblast fusion and the formation of a syncytium during placenta morphogenesis. May recognize and induce fusion through binding of SLC1A4 and SLC1A5. In terms of biological role, endogenous envelope proteins may have kept, lost or modified their original function during evolution. Retroviral envelope proteins mediate receptor recognition and membrane fusion during early infection. The surface protein (SU) mediates receptor recognition, while the transmembrane protein (TM) acts as a class I viral fusion protein. The protein may have at least 3 conformational states: pre-fusion native state, pre-hairpin intermediate state, and post-fusion hairpin state. During viral and target cell membrane fusion, the coiled coil regions (heptad repeats) assume a trimer-of-hairpins structure, positioning the fusion peptide in close proximity to the C-terminal region of the ectodomain. The formation of this structure appears to drive apposition and subsequent fusion of membranes. The protein is Syncytin-1 (ERVW-1) of Gorilla gorilla gorilla (Western lowland gorilla).